A 41-amino-acid polypeptide reads, in one-letter code: Conotoxin Ac4.2 (41 aa).

Residues 1–11 constitute a propeptide that is removed on maturation; sequence FDGRNAAVNER. At proline 13 the chain carries 4-hydroxyproline. Threonine 18 and threonine 20 each carry an O-linked (HexNAc...) threonine glycan. A 4-hydroxyproline mark is found at proline 29 and proline 33. A Cysteine amide modification is found at cysteine 40.

The protein belongs to the conotoxin A superfamily. Contains 3 disulfide bonds. As to expression, expressed by the venom duct.

It is found in the secreted. In terms of biological role, probable neurotoxin with ion channel inhibitor activity. This chain is Conotoxin Ac4.2, found in Conus achatinus (Little frog cone).